Here is a 279-residue protein sequence, read N- to C-terminus: Acetyl-coenzyme A carboxylase carboxyl transferase subunit beta (279 aa).

The CoA carboxyltransferase N-terminal domain maps to Leu23 to Leu279. Cys27, Cys30, Cys46, and Cys49 together coordinate Zn(2+). The C4-type zinc finger occupies Cys27–Cys49.

This sequence belongs to the AccD/PCCB family. In terms of assembly, acetyl-CoA carboxylase is a heterohexamer composed of biotin carboxyl carrier protein (AccB), biotin carboxylase (AccC) and two subunits each of ACCase subunit alpha (AccA) and ACCase subunit beta (AccD). The cofactor is Zn(2+).

It localises to the cytoplasm. It carries out the reaction N(6)-carboxybiotinyl-L-lysyl-[protein] + acetyl-CoA = N(6)-biotinyl-L-lysyl-[protein] + malonyl-CoA. Its pathway is lipid metabolism; malonyl-CoA biosynthesis; malonyl-CoA from acetyl-CoA: step 1/1. In terms of biological role, component of the acetyl coenzyme A carboxylase (ACC) complex. Biotin carboxylase (BC) catalyzes the carboxylation of biotin on its carrier protein (BCCP) and then the CO(2) group is transferred by the transcarboxylase to acetyl-CoA to form malonyl-CoA. The sequence is that of Acetyl-coenzyme A carboxylase carboxyl transferase subunit beta from Chlorobium chlorochromatii (strain CaD3).